Consider the following 840-residue polypeptide: DNA helicase MCM8 (840 aa).

The disordered stretch occupies residues 16–54 (QSWKRGRGGGNFSGKWREREHRPDLSKTTGKRTSEQTPQ). Positions 30–40 (KWREREHRPDL) are enriched in basic and acidic residues. The 208-residue stretch at 402–609 (LFKLIVNSLC…HHDHLLSEHV (208 aa)) folds into the MCM domain. 454–461 (GDPGLGKS) lines the ATP pocket. At S630 the chain carries Phosphoserine.

It belongs to the MCM family. In terms of assembly, component of the MCM8-MCM9 complex, which forms a hexamer composed of MCM8 and MCM9. Interacts with the DNA mismatch repair (MMR) complex composed at least of MSH2, MSH3, MSH6, PMS1 and MLH1. Interacts with RAD51; the interaction recruits RAD51 to DNA damage sites. Interacts with the MRN complex composed of MRE11, RAD50 and NBN/NBS1. Interacts with CDC6 and ORC2. Interacts with HROB; the interaction recruits the MCM8-MCM9 complex to DNA damage sites. As to expression, highest levels in placenta, lung and pancreas. Low levels in skeletal muscle and kidney. Expressed in various tumors with highest levels in colon and lung cancers.

It is found in the nucleus. The protein resides in the chromosome. The catalysed reaction is ATP + H2O = ADP + phosphate + H(+). Component of the MCM8-MCM9 complex, a complex involved in the repair of double-stranded DNA breaks (DBSs) and DNA interstrand cross-links (ICLs) by homologous recombination (HR). Required for DNA resection by the MRE11-RAD50-NBN/NBS1 (MRN) complex by recruiting the MRN complex to the repair site and by promoting the complex nuclease activity. Probably by regulating the localization of the MNR complex, indirectly regulates the recruitment of downstream effector RAD51 to DNA damage sites including DBSs and ICLs. The MCM8-MCM9 complex is dispensable for DNA replication and S phase progression. However, may play a non-essential for DNA replication: may be involved in the activation of the prereplicative complex (pre-RC) during G(1) phase by recruiting CDC6 to the origin recognition complex (ORC). Probably by regulating HR, plays a key role during gametogenesis. Stabilizes MCM9 protein. This chain is DNA helicase MCM8 (MCM8), found in Homo sapiens (Human).